The primary structure comprises 91 residues: Peptide Ctry2146 (91 aa).

Residues 1-23 (MKTQTLLVTFLVVLLMVATQTEA) form the signal peptide. Position 33 is a leucine amide (Leu33). A propeptide spanning residues 37–91 (GLLDGLLGKRGLLFGKRGPLFGKRALTNQDFLDFAYDPSLSAADMDALEMLFEDY) is cleaved from the precursor.

The protein belongs to the non-disulfide-bridged peptide (NDBP) superfamily. Short antimicrobial peptide (group 4) family. In terms of tissue distribution, expressed by the venom gland.

Its subcellular location is the secreted. It is found in the target cell membrane. Antimicrobial peptide. The chain is Peptide Ctry2146 from Chaerilus tryznai (Scorpion).